We begin with the raw amino-acid sequence, 210 residues long: Putative Dihydrofolate reductase (210 aa).

A DHFR domain is found at 4–184; it reads TLYCVVAVDT…IFYMFETYIK (181 aa).

This sequence belongs to the dihydrofolate reductase family.

It carries out the reaction (6S)-5,6,7,8-tetrahydrofolate + NADP(+) = 7,8-dihydrofolate + NADPH + H(+). The sequence is that of Putative Dihydrofolate reductase (ORF2) from Human herpesvirus 8 type P (isolate GK18) (HHV-8).